Reading from the N-terminus, the 135-residue chain is Small ribosomal subunit protein uS9 (135 aa).

The interval 96 to 135 is disordered; sequence SADNRKPLKTEGHLSRDPRAKERRKYGLKKARKAPQFSKR. The span at 97–115 shows a compositional bias: basic and acidic residues; the sequence is ADNRKPLKTEGHLSRDPRA. Residues 116–135 are compositionally biased toward basic residues; it reads KERRKYGLKKARKAPQFSKR.

The protein belongs to the universal ribosomal protein uS9 family.

The polypeptide is Small ribosomal subunit protein uS9 (Prochlorococcus marinus (strain MIT 9313)).